The sequence spans 358 residues: MENARLIEADAVVIGAGPVGLFQVFQLGLQGIAAHVVDALPHVGGQCAELYADKPIYDIPGVPVCTGRELVALLNRQIAPFSPQLHLSQRVETLQPAPDGGFLFATDAGAALHARTVFIAAGVGAFVPRTLKIDGIERFHGTQVFHHEEPAPTRGRQVVVLGGEDTAVARAIACAEPGPEAAASVTLVHRRDAFQAAPQDLARLQALRDSGRIRVLAAQVTGIEAAAQAGTPEPGRLTGVRLLASDGTEQGLPLDTLLLCLGVSPRLGPVADWGLALERKQVKVDTATFSAGVPGLYAVGDINTYPGKRKLILCGFHEATLAAFAAAEHLAGSPVALQYTTTSTRLKERLGVAGAGTP.

D38, Q46, Y51, V91, F126, D301, and T341 together coordinate FAD.

The protein belongs to the ferredoxin--NADP reductase type 2 family. Homodimer. FAD is required as a cofactor.

It catalyses the reaction 2 reduced [2Fe-2S]-[ferredoxin] + NADP(+) + H(+) = 2 oxidized [2Fe-2S]-[ferredoxin] + NADPH. The protein is Ferredoxin--NADP reductase of Paracidovorax citrulli (strain AAC00-1) (Acidovorax citrulli).